Consider the following 113-residue polypeptide: Large ribosomal subunit protein uL22 (113 aa).

Belongs to the universal ribosomal protein uL22 family. As to quaternary structure, part of the 50S ribosomal subunit.

This protein binds specifically to 23S rRNA; its binding is stimulated by other ribosomal proteins, e.g. L4, L17, and L20. It is important during the early stages of 50S assembly. It makes multiple contacts with different domains of the 23S rRNA in the assembled 50S subunit and ribosome. Functionally, the globular domain of the protein is located near the polypeptide exit tunnel on the outside of the subunit, while an extended beta-hairpin is found that lines the wall of the exit tunnel in the center of the 70S ribosome. This Halalkalibacterium halodurans (strain ATCC BAA-125 / DSM 18197 / FERM 7344 / JCM 9153 / C-125) (Bacillus halodurans) protein is Large ribosomal subunit protein uL22.